We begin with the raw amino-acid sequence, 204 residues long: RNA-free ribonuclease P (204 aa).

Belongs to the HARP family.

The catalysed reaction is Endonucleolytic cleavage of RNA, removing 5'-extranucleotides from tRNA precursor.. Its function is as follows. RNA-free RNase P that catalyzes the removal of the 5'-leader sequence from pre-tRNA to produce the mature 5'-terminus. The sequence is that of RNA-free ribonuclease P from Ignicoccus hospitalis (strain KIN4/I / DSM 18386 / JCM 14125).